A 192-amino-acid chain; its full sequence is Probable metallophosphoesterase MJ0623 (192 aa).

The a divalent metal cation site is built by D41, H43, D70, N92, H115, H144, and H146.

This sequence belongs to the metallophosphoesterase superfamily. YfcE family. A divalent metal cation is required as a cofactor.

This Methanocaldococcus jannaschii (strain ATCC 43067 / DSM 2661 / JAL-1 / JCM 10045 / NBRC 100440) (Methanococcus jannaschii) protein is Probable metallophosphoesterase MJ0623.